The following is a 396-amino-acid chain: Non-homologous end joining protein Ku (396 aa).

A Ku domain is found at 9-189 (ISFGLVSIPV…DVAVRPQELS (181 aa)). The span at 278–288 (DGDAGPAAAGV) shows a compositional bias: low complexity. The disordered stretch occupies residues 278–396 (DGDAGPAAAG…SKTPPTRRSA (119 aa)). Over residues 294–312 (DDKASDDKASDDKASDGRR) the composition is skewed to basic and acidic residues. A compositionally biased stretch (polar residues) spans 315 to 336 (RTSSVKGASSAPGTRSTARKTP). Low complexity predominate over residues 337–396 (SSTRSTAKTNAATKTPPAKTSAAKASAAKTSAAKATSSRTAPKTAPRTPTSKTPPTRRSA).

Belongs to the prokaryotic Ku family. As to quaternary structure, homodimer. Interacts with LigD.

Functionally, with LigD forms a non-homologous end joining (NHEJ) DNA repair enzyme, which repairs dsDNA breaks with reduced fidelity. Binds linear dsDNA with 5'- and 3'- overhangs but not closed circular dsDNA nor ssDNA. Recruits and stimulates the ligase activity of LigD. The protein is Non-homologous end joining protein Ku of Frankia casuarinae (strain DSM 45818 / CECT 9043 / HFP020203 / CcI3).